Consider the following 95-residue polypeptide: Putative ESAT-6-like protein X (95 aa).

The segment at 72 to 95 (HGQKVQRASSSMADTDRSVSSAWS) is disordered.

This sequence belongs to the WXG100 family.

The protein is Putative ESAT-6-like protein X of Mycobacterium leprae (strain TN).